Here is a 623-residue protein sequence, read N- to C-terminus: Ciliated left-right organizer metallopeptidase (623 aa).

An N-terminal signal peptide occupies residues 1 to 20 (MSFLLCIGILLLPWFPCVCG). The Extracellular portion of the chain corresponds to 21-578 (KCIFDQIQRS…LFLVSEAKIS (558 aa)). Histidine 249 contacts Zn(2+). Residue glutamate 250 is part of the active site. 2 residues coordinate Zn(2+): histidine 253 and histidine 326. A helical membrane pass occupies residues 579-599 (LAAVLSLMAVFALLSAAVLLY). At 600–623 (RKNLSVRVHAASYRTPLPHILYRN) the chain is on the cytoplasmic side.

Belongs to the peptidase M8 family. Requires Zn(2+) as cofactor. In terms of tissue distribution, expressed specifically in dorsal forerunner cells (DFCs) that form a ciliated Kupffer's vesicle later.

It localises to the membrane. Functionally, plays an essential role for patterning the left-right axis. Requires solely on the left side, downstream of the leftward flow, but upstream of dand5, a nodal inhibitor involved in left-right patterning. The polypeptide is Ciliated left-right organizer metallopeptidase (cirop) (Danio rerio (Zebrafish)).